Consider the following 353-residue polypeptide: Photosystem II D2 protein (353 aa).

Position 2 is an N-acetylthreonine (Thr-2). At Thr-2 the chain carries Phosphothreonine. Residues 41–61 (CAYFALGGWFTGTTFVTSWYT) form a helical membrane-spanning segment. His-118 serves as a coordination point for chlorophyll a. Residues 125-141 (GFMLRQFELARSVQLRP) form a helical membrane-spanning segment. Gln-130 and Asn-143 together coordinate pheophytin a. Residues 153 to 166 (VFVSVFLIYPLGQS) form a helical membrane-spanning segment. His-198 contributes to the chlorophyll a binding site. Residues 208-228 (AALLCAIHGATVENTLFEDGD) form a helical membrane-spanning segment. Residues His-215 and Phe-262 each coordinate a plastoquinone. Residue His-215 participates in Fe cation binding. A Fe cation-binding site is contributed by His-269. Residues 279–295 (GLWMSALGVVGLALNLR) form a helical membrane-spanning segment.

It belongs to the reaction center PufL/M/PsbA/D family. PSII is composed of 1 copy each of membrane proteins PsbA, PsbB, PsbC, PsbD, PsbE, PsbF, PsbH, PsbI, PsbJ, PsbK, PsbL, PsbM, PsbT, PsbX, PsbY, PsbZ, Psb30/Ycf12, at least 3 peripheral proteins of the oxygen-evolving complex and a large number of cofactors. It forms dimeric complexes. The D1/D2 heterodimer binds P680, chlorophylls that are the primary electron donor of PSII, and subsequent electron acceptors. It shares a non-heme iron and each subunit binds pheophytin, quinone, additional chlorophylls, carotenoids and lipids. There is also a Cl(-1) ion associated with D1 and D2, which is required for oxygen evolution. The PSII complex binds additional chlorophylls, carotenoids and specific lipids. serves as cofactor.

It is found in the plastid. The protein localises to the chloroplast thylakoid membrane. The enzyme catalyses 2 a plastoquinone + 4 hnu + 2 H2O = 2 a plastoquinol + O2. Photosystem II (PSII) is a light-driven water:plastoquinone oxidoreductase that uses light energy to abstract electrons from H(2)O, generating O(2) and a proton gradient subsequently used for ATP formation. It consists of a core antenna complex that captures photons, and an electron transfer chain that converts photonic excitation into a charge separation. The D1/D2 (PsbA/PsbD) reaction center heterodimer binds P680, the primary electron donor of PSII as well as several subsequent electron acceptors. D2 is needed for assembly of a stable PSII complex. This Olimarabidopsis pumila (Dwarf rocket) protein is Photosystem II D2 protein.